The primary structure comprises 187 residues: UPF0301 protein Pcryo_0062 (187 aa).

Belongs to the UPF0301 (AlgH) family.

The sequence is that of UPF0301 protein Pcryo_0062 from Psychrobacter cryohalolentis (strain ATCC BAA-1226 / DSM 17306 / VKM B-2378 / K5).